Here is a 415-residue protein sequence, read N- to C-terminus: Serine/threonine transporter SstT (415 aa).

A run of 8 helical transmembrane segments spans residues 15-35, 45-65, 85-105, 142-162, 193-213, 217-237, 301-321, and 331-351; these read GSLVKQILVGLIAGILLAWLA, LGTLFVGALKAVAPVLVWILV, ILYILGTFFAALVAVAGSFIF, ALLNGNYIGILAWAIGLGIAL, VGIFGLVSATIAETGFNALLG, LLVVLLSCMLVMALVVNPLIV, GAAVTIPVLTLAAVNTLGIPV, and VVSAICACGASGVAGGSLLLI.

The protein belongs to the dicarboxylate/amino acid:cation symporter (DAACS) (TC 2.A.23) family.

The protein localises to the cell inner membrane. The enzyme catalyses L-serine(in) + Na(+)(in) = L-serine(out) + Na(+)(out). It catalyses the reaction L-threonine(in) + Na(+)(in) = L-threonine(out) + Na(+)(out). Its function is as follows. Involved in the import of serine and threonine into the cell, with the concomitant import of sodium (symport system). This Photorhabdus laumondii subsp. laumondii (strain DSM 15139 / CIP 105565 / TT01) (Photorhabdus luminescens subsp. laumondii) protein is Serine/threonine transporter SstT.